A 230-amino-acid polypeptide reads, in one-letter code: Small ribosomal subunit protein uS2 (230 aa).

This sequence belongs to the universal ribosomal protein uS2 family.

The protein is Small ribosomal subunit protein uS2 of Prochlorococcus marinus (strain NATL2A).